The following is a 448-amino-acid chain: Cytoplasmic tRNA 2-thiolation protein 2 (448 aa).

It belongs to the CTU2/NCS2 family.

The protein resides in the cytoplasm. Its pathway is tRNA modification; 5-methoxycarbonylmethyl-2-thiouridine-tRNA biosynthesis. Its function is as follows. Plays a central role in 2-thiolation of mcm(5)S(2)U at tRNA wobble positions of tRNA(Lys), tRNA(Glu) and tRNA(Gln). May act by forming a heterodimer with NCS6 that ligates sulfur from thiocarboxylated URM1 onto the uridine of tRNAs at wobble position. Prior mcm(5) tRNA modification by the elongator complex is required for 2-thiolation. May also be involved in protein urmylation. This is Cytoplasmic tRNA 2-thiolation protein 2 from Lodderomyces elongisporus (strain ATCC 11503 / CBS 2605 / JCM 1781 / NBRC 1676 / NRRL YB-4239) (Yeast).